A 239-amino-acid chain; its full sequence is MFPSFEVIPAVDMQDGQVVQLVGGERGTETEYGDPVAAAQRWVDAGAETLHLVDLDGAFEGERANADAVEAVLEATDVSVQLGGGIRTVDDADSLLSMGVDRVILGTAAVENPDIVGEINDRHPGSVVVSLDAKDGEVVVSGWTESTGLDPAEAAARYEAEGAGGVLFTDVDVEGQLSGVRADEIARVVDAVDIPVIASGGVSTLSDIEALKDAGAAATVVGTALYEGEFTLEEAAAVV.

Aspartate 12 functions as the Proton acceptor in the catalytic mechanism. The Proton donor role is filled by aspartate 132.

It belongs to the HisA/HisF family.

Its subcellular location is the cytoplasm. The enzyme catalyses 1-(5-phospho-beta-D-ribosyl)-5-[(5-phospho-beta-D-ribosylamino)methylideneamino]imidazole-4-carboxamide = 5-[(5-phospho-1-deoxy-D-ribulos-1-ylimino)methylamino]-1-(5-phospho-beta-D-ribosyl)imidazole-4-carboxamide. The protein operates within amino-acid biosynthesis; L-histidine biosynthesis; L-histidine from 5-phospho-alpha-D-ribose 1-diphosphate: step 4/9. The protein is 1-(5-phosphoribosyl)-5-[(5-phosphoribosylamino)methylideneamino] imidazole-4-carboxamide isomerase of Natronomonas pharaonis (strain ATCC 35678 / DSM 2160 / CIP 103997 / JCM 8858 / NBRC 14720 / NCIMB 2260 / Gabara) (Halobacterium pharaonis).